The following is a 204-amino-acid chain: Vacuolar protein-sorting-associated protein 46 (204 aa).

The segment at Met1–Met103 is interaction with VSP24. Ser5 is subject to Phosphoserine. 2 coiled-coil regions span residues Leu9–Ala56 and Asn109–Leu129. Positions Asp104–Gly204 are interaction with VSP4. The segment at Asn176–Gly204 is interaction with VTA1. Basic and acidic residues predominate over residues Val185–Ala196. Residues Val185–Gly204 are disordered.

The protein belongs to the SNF7 family. As to quaternary structure, self-associates. Interacts with VPS4 and VTA1. Interacts with IST1.

Its subcellular location is the endosome membrane. The protein localises to the endomembrane system. Functionally, class E VPS protein implicated in concentration and sorting of cargo proteins of the multivesicular body (MVB) for incorporation into intralumenal vesicles. The lumenal sequestrated membrane proteins will be targeted into the vacuole after fusion of the endosome with the vacuole. Probably acts as a peripherally associated component of the ESCRT-III complex, which appears to be critical for late steps in MVB sorting, such as membrane invagination and final cargo sorting and recruits late-acting components of the sorting machinery. The MVB pathway requires the sequential function of ESCRT-O, -I,-II and -III complex assemblies. Regulates the membrane association of VPS4. Can stimulate VPS4 ATPase activity directly or via VTA1. This Saccharomyces cerevisiae (strain ATCC 204508 / S288c) (Baker's yeast) protein is Vacuolar protein-sorting-associated protein 46 (DID2).